The chain runs to 530 residues: GMP synthase [glutamine-hydrolyzing] (530 aa).

Residues 4–205 (RILILDYGSQ…VKDICGCEGD (202 aa)) enclose the Glutamine amidotransferase type-1 domain. C84 functions as the Nucleophile in the catalytic mechanism. Residues H179 and E181 contribute to the active site. In terms of domain architecture, GMPS ATP-PPase spans 206-398 (WNMPDYISEA…LGLPPQMVYR (193 aa)). 233-239 (SGGVDSL) is an ATP binding site.

Homodimer.

It catalyses the reaction XMP + L-glutamine + ATP + H2O = GMP + L-glutamate + AMP + diphosphate + 2 H(+). Its pathway is purine metabolism; GMP biosynthesis; GMP from XMP (L-Gln route): step 1/1. Its function is as follows. Catalyzes the synthesis of GMP from XMP. The protein is GMP synthase [glutamine-hydrolyzing] of Bordetella parapertussis (strain 12822 / ATCC BAA-587 / NCTC 13253).